Here is a 340-residue protein sequence, read N- to C-terminus: Phosphoribosylformylglycinamidine cyclo-ligase (340 aa).

This sequence belongs to the AIR synthase family.

The protein localises to the cytoplasm. It catalyses the reaction 2-formamido-N(1)-(5-O-phospho-beta-D-ribosyl)acetamidine + ATP = 5-amino-1-(5-phospho-beta-D-ribosyl)imidazole + ADP + phosphate + H(+). It functions in the pathway purine metabolism; IMP biosynthesis via de novo pathway; 5-amino-1-(5-phospho-D-ribosyl)imidazole from N(2)-formyl-N(1)-(5-phospho-D-ribosyl)glycinamide: step 2/2. This chain is Phosphoribosylformylglycinamidine cyclo-ligase, found in Streptococcus pneumoniae (strain 70585).